Consider the following 626-residue polypeptide: Grainyhead-like protein 3 homolog (626 aa).

The transcription activation stretch occupies residues 30–95; sequence EAWKTYLENP…QGKRYYHGME (66 aa). The region spanning 226 to 460 is the Grh/CP2 DB domain; the sequence is SLKSDFEYTL…DLETPPVLFI (235 aa).

The protein belongs to the grh/CP2 family. Grainyhead subfamily. Homodimer, also forms heterodimers with GRHL1 and GRHL2. Interacts with LMO4. As to expression, expressed in brain, colon, pancreas, placenta and kidney. Isoform 1 is expressed in lung and tonsil. Isoform 2 is prostate-specific.

The protein localises to the nucleus. In terms of biological role, transcription factor playing important roles in primary neurulation and in the differentiation of stratified epithelia of both ectodermal and endodermal origin. Binds directly to the consensus DNA sequence 5'-AACCGGTT-3' acting as an activator and repressor on distinct target genes. xhibits functional redundancy with GRHL2 in epidermal morphogenetic events and epidermal wound repair. Exhibits functional redundancy with GRHL2 in epidermal morphogenetic events and epidermal wound repair but is essential to form the epidermal barrier with TGM3 as critical direct target gene among others. Despite being dispensable during normal epidermal homeostasis in the adulthood, is again required for barrier repair after immune-mediated epidermal damage, regulates distinct gene batteries in embryonic epidermal differentiation and adult epidermal barrier reformation after injury. Plays unique and cooperative roles with GRHL2 in establishing distinct zones of primary neurulation. Essential for spinal closure, functions cooperatively with GRHL2 in closure 2 (forebrain/midbrain boundary) and posterior neuropore closure. Also required for proper development of the oral periderm. No genetic interaction with GRHL3, no functional cooperativity due to diverse target gene selectivity. This Homo sapiens (Human) protein is Grainyhead-like protein 3 homolog.